The following is a 71-amino-acid chain: DNA-directed RNA polymerase subunit omega (71 aa).

It belongs to the RNA polymerase subunit omega family. As to quaternary structure, the RNAP catalytic core consists of 2 alpha, 1 beta, 1 beta' and 1 omega subunit. When a sigma factor is associated with the core the holoenzyme is formed, which can initiate transcription.

The enzyme catalyses RNA(n) + a ribonucleoside 5'-triphosphate = RNA(n+1) + diphosphate. Functionally, promotes RNA polymerase assembly. Latches the N- and C-terminal regions of the beta' subunit thereby facilitating its interaction with the beta and alpha subunits. The sequence is that of DNA-directed RNA polymerase subunit omega from Syntrophomonas wolfei subsp. wolfei (strain DSM 2245B / Goettingen).